The following is a 96-amino-acid chain: MSRSIKKGPFVAERLEAKVVTMNAKSEKKVVKTWSRASTILPEFVGHTFAVHNGNKFIPVYVTENMVGHKLGEFSPTRLFRGHAGQKADVKKKGGK.

It belongs to the universal ribosomal protein uS19 family.

In terms of biological role, protein S19 forms a complex with S13 that binds strongly to the 16S ribosomal RNA. The protein is Small ribosomal subunit protein uS19 of Gemmatimonas aurantiaca (strain DSM 14586 / JCM 11422 / NBRC 100505 / T-27).